A 318-amino-acid polypeptide reads, in one-letter code: Homoserine kinase (318 aa).

Residue 97–107 (PIGSGLGSSAC) coordinates ATP.

It belongs to the GHMP kinase family. Homoserine kinase subfamily.

It is found in the cytoplasm. The enzyme catalyses L-homoserine + ATP = O-phospho-L-homoserine + ADP + H(+). It functions in the pathway amino-acid biosynthesis; L-threonine biosynthesis; L-threonine from L-aspartate: step 4/5. In terms of biological role, catalyzes the ATP-dependent phosphorylation of L-homoserine to L-homoserine phosphate. This is Homoserine kinase from Vibrio cholerae serotype O1 (strain ATCC 39541 / Classical Ogawa 395 / O395).